A 549-amino-acid polypeptide reads, in one-letter code: Chaperonin GroEL (549 aa).

Residues threonine 30–proline 33, lysine 51, aspartate 87–threonine 91, glycine 415, and aspartate 496 each bind ATP.

This sequence belongs to the chaperonin (HSP60) family. As to quaternary structure, forms a cylinder of 14 subunits composed of two heptameric rings stacked back-to-back. Interacts with the co-chaperonin GroES.

It localises to the cytoplasm. The catalysed reaction is ATP + H2O + a folded polypeptide = ADP + phosphate + an unfolded polypeptide.. Together with its co-chaperonin GroES, plays an essential role in assisting protein folding. The GroEL-GroES system forms a nano-cage that allows encapsulation of the non-native substrate proteins and provides a physical environment optimized to promote and accelerate protein folding. This chain is Chaperonin GroEL, found in Acidiphilium cryptum (strain JF-5).